The chain runs to 342 residues: Tetraacyldisaccharide 4'-kinase (342 aa).

Position 68-75 (68-75 (TVGGTGKT)) interacts with ATP.

This sequence belongs to the LpxK family.

The enzyme catalyses a lipid A disaccharide + ATP = a lipid IVA + ADP + H(+). The protein operates within glycolipid biosynthesis; lipid IV(A) biosynthesis; lipid IV(A) from (3R)-3-hydroxytetradecanoyl-[acyl-carrier-protein] and UDP-N-acetyl-alpha-D-glucosamine: step 6/6. Functionally, transfers the gamma-phosphate of ATP to the 4'-position of a tetraacyldisaccharide 1-phosphate intermediate (termed DS-1-P) to form tetraacyldisaccharide 1,4'-bis-phosphate (lipid IVA). The polypeptide is Tetraacyldisaccharide 4'-kinase (Burkholderia multivorans (strain ATCC 17616 / 249)).